The chain runs to 88 residues: Small ribosomal subunit protein bS16c (88 aa).

As to quaternary structure, component of the chloroplast small ribosomal subunit (SSU). Mature 70S chloroplast ribosomes of higher plants consist of a small (30S) and a large (50S) subunit. The 30S small subunit contains 1 molecule of ribosomal RNA (16S rRNA) and 24 different proteins. The 50S large subunit contains 3 rRNA molecules (23S, 5S and 4.5S rRNA) and 33 different proteins.

The protein resides in the plastid. It is found in the chloroplast. In terms of biological role, component of the chloroplast ribosome (chloro-ribosome), a dedicated translation machinery responsible for the synthesis of chloroplast genome-encoded proteins, including proteins of the transcription and translation machinery and components of the photosynthetic apparatus. The protein is Small ribosomal subunit protein bS16c of Spinacia oleracea (Spinach).